Consider the following 69-residue polypeptide: uncharacterized protein (69 aa).

This is an uncharacterized protein from Homo sapiens (Human).